The primary structure comprises 360 residues: Peptide chain release factor 1 (360 aa).

Glutamine 235 bears the N5-methylglutamine mark. Basic and acidic residues predominate over residues glutamate 281–arginine 307. The tract at residues glutamate 281 to phenylalanine 311 is disordered.

Belongs to the prokaryotic/mitochondrial release factor family. Methylated by PrmC. Methylation increases the termination efficiency of RF1.

Its subcellular location is the cytoplasm. In terms of biological role, peptide chain release factor 1 directs the termination of translation in response to the peptide chain termination codons UAG and UAA. In Rhizobium meliloti (strain 1021) (Ensifer meliloti), this protein is Peptide chain release factor 1.